The sequence spans 133 residues: Beta-synuclein (133 aa).

2 repeat units span residues 20–30 and 31–41. The interval 20 to 66 is 4 X 11 AA tandem repeats of [EGS]-K-T-K-[EQ]-[GQ]-V-X(4); sequence EKTKQGVTEAAEKTKEGVLYVGSKTSGVVQGVASVAEKTKEQASHLG. Residues 42–55 form a 3; approximate repeat; that stretch reads SKTSGVVQGVASVA. Ser-45 is subject to Phosphoserine. Repeat unit 4 spans residues 56-66; sequence EKTKEQASHLG. The disordered stretch occupies residues 96–133; that stretch reads EVAQEAAEEPLIEPLMEPEGESYEDSPQEEYQEYEPEA. The segment covering 97 to 133 has biased composition (acidic residues); the sequence is VAQEAAEEPLIEPLMEPEGESYEDSPQEEYQEYEPEA. Ser-117 bears the Phosphoserine; by BARK1, CK2 and GRK5 mark.

The protein belongs to the synuclein family. Phosphorylated. Phosphorylation by G-protein coupled receptor kinases (GRK) is more efficient than phosphorylation by CK1, CK2 and CaM-kinase II. Highly expressed in the brain.

It localises to the cytoplasm. In terms of biological role, may be involved in neuronal plasticity. In Mus musculus (Mouse), this protein is Beta-synuclein (Sncb).